We begin with the raw amino-acid sequence, 258 residues long: Imidazole glycerol phosphate synthase subunit HisF (258 aa).

Catalysis depends on residues Asp-11 and Asp-130.

Belongs to the HisA/HisF family. As to quaternary structure, heterodimer of HisH and HisF.

The protein localises to the cytoplasm. It carries out the reaction 5-[(5-phospho-1-deoxy-D-ribulos-1-ylimino)methylamino]-1-(5-phospho-beta-D-ribosyl)imidazole-4-carboxamide + L-glutamine = D-erythro-1-(imidazol-4-yl)glycerol 3-phosphate + 5-amino-1-(5-phospho-beta-D-ribosyl)imidazole-4-carboxamide + L-glutamate + H(+). It participates in amino-acid biosynthesis; L-histidine biosynthesis; L-histidine from 5-phospho-alpha-D-ribose 1-diphosphate: step 5/9. In terms of biological role, IGPS catalyzes the conversion of PRFAR and glutamine to IGP, AICAR and glutamate. The HisF subunit catalyzes the cyclization activity that produces IGP and AICAR from PRFAR using the ammonia provided by the HisH subunit. This chain is Imidazole glycerol phosphate synthase subunit HisF, found in Stenotrophomonas maltophilia (strain R551-3).